The sequence spans 339 residues: Methylglutaconyl-CoA hydratase, mitochondrial (339 aa).

A mitochondrion-targeting transit peptide spans 1-67 (MAAAVAAAPG…AGGPAPKRGY (67 aa)). Residue K100 is modified to N6-acetyllysine; alternate. K100 is modified (N6-succinyllysine; alternate). Residues 105–119 (KNLIKMLSKAVDALK) form an RNA-binding region. The residue at position 109 (K109) is an N6-succinyllysine. N6-acetyllysine; alternate is present on residues K113 and K144. K113 and K144 each carry N6-succinyllysine; alternate. K148 and K160 each carry N6-succinyllysine. K204 and K211 each carry N6-acetyllysine; alternate. K204 and K211 each carry N6-succinyllysine; alternate. Residue K329 is modified to N6-succinyllysine.

It belongs to the enoyl-CoA hydratase/isomerase family. As to quaternary structure, homohexamer.

It is found in the mitochondrion. It carries out the reaction (3S)-3-hydroxy-3-methylglutaryl-CoA = 3-methyl-(2E)-glutaconyl-CoA + H2O. The enzyme catalyses (3S)-citramalyl-CoA = itaconyl-CoA + H2O. The catalysed reaction is 3-hydroxyisovaleryl-CoA = 3-methylbut-2-enoyl-CoA + H2O. It catalyses the reaction (S)-3-hydroxyglutaryl-CoA = (2E)-glutaconyl-CoA + H2O. Its pathway is amino-acid degradation; L-leucine degradation; (S)-3-hydroxy-3-methylglutaryl-CoA from 3-isovaleryl-CoA: step 3/3. In terms of biological role, catalyzes the fifth step in the leucine degradation pathway, the reversible hydration of 3-methylglutaconyl-CoA (3-MG-CoA) to 3-hydroxy-3-methylglutaryl-CoA (HMG-CoA). Can catalyze the reverse reaction but at a much lower rate in vitro. HMG-CoA is then quickly degraded by another enzyme (such as HMG-CoA lyase) to give acetyl-CoA and acetoacetate. Uses other substrates such as (2E)-glutaconyl-CoA efficiently in vitro, and to a lesser extent 3-methylcrotonyl-CoA (3-methyl-(2E)-butenoyl-CoA), crotonyl-CoA ((2E)-butenoyl-CoA) and 3-hydroxybutanoyl-CoA (the missing carboxylate reduces affinity to the active site). Originally it was identified as an RNA-binding protein as it binds to AU-rich elements (AREs) in vitro. AREs direct rapid RNA degradation and mRNA deadenylation. Might have itaconyl-CoA hydratase activity, converting itaconyl-CoA into citramalyl-CoA in the C5-dicarboxylate catabolism pathway. The C5-dicarboxylate catabolism pathway is required to detoxify itaconate, an antimicrobial metabolite and immunomodulator produced by macrophages during certain infections, that can act as a vitamin B12-poisoning metabolite. The sequence is that of Methylglutaconyl-CoA hydratase, mitochondrial (AUH) from Homo sapiens (Human).